Reading from the N-terminus, the 211-residue chain is Urease accessory protein UreG (211 aa).

A GTP-binding site is contributed by 11–18 (GPVGAGKT).

The protein belongs to the SIMIBI class G3E GTPase family. UreG subfamily. In terms of assembly, homodimer. UreD, UreF and UreG form a complex that acts as a GTP-hydrolysis-dependent molecular chaperone, activating the urease apoprotein by helping to assemble the nickel containing metallocenter of UreC. The UreE protein probably delivers the nickel.

The protein localises to the cytoplasm. Its function is as follows. Facilitates the functional incorporation of the urease nickel metallocenter. This process requires GTP hydrolysis, probably effectuated by UreG. The sequence is that of Urease accessory protein UreG from Actinobacillus pleuropneumoniae serotype 7 (strain AP76).